The following is a 352-amino-acid chain: Blue-sensitive opsin (352 aa).

The Extracellular portion of the chain corresponds to 1-42 (MRGNRLVEFPDDFWIPIPLDTNNVTALSPFLVPQDHLGSPTI). An N-linked (GlcNAc...) asparagine glycan is attached at asparagine 23. Residues 43-67 (FYSMSALMFVLFVAGTAINLLTIAC) form a helical membrane-spanning segment. At 68–79 (TLQYKKLRSHLN) the chain is on the cytoplasmic side. Residues 80–105 (YILVNMAVANLIVASTGSSTCFVCFA) traverse the membrane as a helical segment. At 106–119 (FKYMVLGPLGCKIE) the chain is on the extracellular side. A disulfide bridge links cysteine 116 with cysteine 193. A helical membrane pass occupies residues 120-139 (GFTAALGGMVSLWSLAVIAF). Topologically, residues 140 to 158 (ERWLVICKPLGNFVFKSEH) are cytoplasmic. The helical transmembrane segment at 159 to 182 (ALLCCALTWVCGLCASVPPLVGWS) threads the bilayer. Residues 183 to 208 (RYIPEGMQCSCGPDWYTTGNKFNNES) lie on the Extracellular side of the membrane. Asparagine 206 carries N-linked (GlcNAc...) asparagine glycosylation. Residues 209 to 236 (FVMFLFCFCFAVPFSIIVFCYSQLLFTL) form a helical membrane-spanning segment. Over 237-258 (KMAAKAQADSASTQKAEKEVTR) the chain is Cytoplasmic. Residues 259-282 (MVVVMVVAFLVCYVPYASFALWVI) traverse the membrane as a helical segment. The Extracellular portion of the chain corresponds to 283–290 (NNRGQTFD). The chain crosses the membrane as a helical span at residues 291–315 (LRLATIPSCVSKASTVYNPVIYVLL). Lysine 302 carries the N6-(retinylidene)lysine modification. Residues 316 to 352 (NKQFRLCMKKMLGMSADEDEESSTSQSTTEVSKVGPS) lie on the Cytoplasmic side of the membrane. The disordered stretch occupies residues 332-352 (DEDEESSTSQSTTEVSKVGPS).

The protein belongs to the G-protein coupled receptor 1 family. Opsin subfamily. Post-translationally, phosphorylated on some or all of the serine and threonine residues present in the C-terminal region. As to expression, the color pigments are found in the cone photoreceptor cells.

The protein localises to the membrane. Its function is as follows. Visual pigments are the light-absorbing molecules that mediate vision. They consist of an apoprotein, opsin, covalently linked to cis-retinal. The chain is Blue-sensitive opsin from Oryzias latipes (Japanese rice fish).